The primary structure comprises 361 residues: Outer membrane protein P2 (361 aa).

A signal peptide spans 1-20 (MKKTLAALIVGAFAASAANA).

This sequence belongs to the Gram-negative porin family. Homotrimer.

The protein localises to the cell outer membrane. Forms pores that allow passive diffusion of small molecules across the outer membrane. The chain is Outer membrane protein P2 (ompP2) from Haemophilus influenzae.